We begin with the raw amino-acid sequence, 452 residues long: UDP-N-acetylmuramoylalanine--D-glutamate ligase (452 aa).

115–121 (GTNGKTT) provides a ligand contact to ATP.

Belongs to the MurCDEF family.

The protein resides in the cytoplasm. It carries out the reaction UDP-N-acetyl-alpha-D-muramoyl-L-alanine + D-glutamate + ATP = UDP-N-acetyl-alpha-D-muramoyl-L-alanyl-D-glutamate + ADP + phosphate + H(+). The protein operates within cell wall biogenesis; peptidoglycan biosynthesis. Functionally, cell wall formation. Catalyzes the addition of glutamate to the nucleotide precursor UDP-N-acetylmuramoyl-L-alanine (UMA). This chain is UDP-N-acetylmuramoylalanine--D-glutamate ligase, found in Geobacter sp. (strain M21).